The primary structure comprises 130 residues: Large ribosomal subunit protein bL20 (130 aa).

It belongs to the bacterial ribosomal protein bL20 family.

In terms of biological role, binds directly to 23S ribosomal RNA and is necessary for the in vitro assembly process of the 50S ribosomal subunit. It is not involved in the protein synthesizing functions of that subunit. This is Large ribosomal subunit protein bL20 from Clavibacter sepedonicus (Clavibacter michiganensis subsp. sepedonicus).